Reading from the N-terminus, the 428-residue chain is GTPase Obg (428 aa).

Positions 1 to 158 (MFVDQVKIYV…RDVILELKVL (158 aa)) constitute an Obg domain. The region spanning 159 to 329 (ADVGLVGFPS…LLFEVANLIE (171 aa)) is the OBG-type G domain. Residues 165–172 (GFPSVGKS), 190–194 (FTTIV), 212–215 (DLPG), 282–285 (NKMD), and 310–312 (SAV) each bind GTP. Mg(2+) contacts are provided by Ser-172 and Thr-192. The 79-residue stretch at 350–428 (KFETEGVKFD…ILEYEFEFID (79 aa)) folds into the OCT domain.

The protein belongs to the TRAFAC class OBG-HflX-like GTPase superfamily. OBG GTPase family. Monomer. The cofactor is Mg(2+).

It localises to the cytoplasm. An essential GTPase which binds GTP, GDP and possibly (p)ppGpp with moderate affinity, with high nucleotide exchange rates and a fairly low GTP hydrolysis rate. Plays a role in control of the cell cycle, stress response, ribosome biogenesis and in those bacteria that undergo differentiation, in morphogenesis control. The chain is GTPase Obg from Bacillus cereus (strain AH820).